Consider the following 379-residue polypeptide: Serine/threonine-protein kinase spe-6 (379 aa).

In terms of domain architecture, Protein kinase spans 26 to 302 (WKVLRNIYSG…SQAATEHQVT (277 aa)). Residues 32-40 (IYSGPFSDV) and lysine 55 contribute to the ATP site. The active-site Proton acceptor is aspartate 147. The interval 331-379 (ASAKLDAKDNANESMDIEFDDMPPKEGISKSLSAEKSCTKNVETARTEK) is disordered. Over residues 360 to 372 (KSLSAEKSCTKNV) the composition is skewed to polar residues.

It belongs to the protein kinase superfamily. CK1 Ser/Thr protein kinase family.

It catalyses the reaction L-seryl-[protein] + ATP = O-phospho-L-seryl-[protein] + ADP + H(+). It carries out the reaction L-threonyl-[protein] + ATP = O-phospho-L-threonyl-[protein] + ADP + H(+). Functionally, serine/threonine-protein kinase which is involved in spermatogenesis. In spermatocytes, regulates meiosis and the localization and assembly of major sperm protein (MSP) into fibrous bodies. In addition, may suppress the initiation of spermiogenesis downstream of spe-8, spe-12, spe-27 and spe-29. The chain is Serine/threonine-protein kinase spe-6 from Caenorhabditis elegans.